The sequence spans 211 residues: Shikimate kinase (211 aa).

Positions 1–13 (MNASANLCAASAN) are enriched in low complexity. A disordered region spans residues 1 to 24 (MNASANLCAASANDPQPGDQEAAH). An ATP-binding site is contributed by 50–55 (GAGKTT). Thr-54 lines the Mg(2+) pocket. The substrate site is built by Asp-72, Arg-96, and Gly-118. Residue Arg-156 coordinates ATP. Arg-175 provides a ligand contact to substrate.

It belongs to the shikimate kinase family. As to quaternary structure, monomer. Mg(2+) is required as a cofactor.

The protein resides in the cytoplasm. It catalyses the reaction shikimate + ATP = 3-phosphoshikimate + ADP + H(+). It participates in metabolic intermediate biosynthesis; chorismate biosynthesis; chorismate from D-erythrose 4-phosphate and phosphoenolpyruvate: step 5/7. Catalyzes the specific phosphorylation of the 3-hydroxyl group of shikimic acid using ATP as a cosubstrate. In Bordetella parapertussis (strain 12822 / ATCC BAA-587 / NCTC 13253), this protein is Shikimate kinase.